The primary structure comprises 182 residues: ATP synthase subunit delta (182 aa).

Belongs to the ATPase delta chain family. As to quaternary structure, F-type ATPases have 2 components, F(1) - the catalytic core - and F(0) - the membrane proton channel. F(1) has five subunits: alpha(3), beta(3), gamma(1), delta(1), epsilon(1). F(0) has three main subunits: a(1), b(2) and c(10-14). The alpha and beta chains form an alternating ring which encloses part of the gamma chain. F(1) is attached to F(0) by a central stalk formed by the gamma and epsilon chains, while a peripheral stalk is formed by the delta and b chains.

The protein localises to the cell inner membrane. In terms of biological role, f(1)F(0) ATP synthase produces ATP from ADP in the presence of a proton or sodium gradient. F-type ATPases consist of two structural domains, F(1) containing the extramembraneous catalytic core and F(0) containing the membrane proton channel, linked together by a central stalk and a peripheral stalk. During catalysis, ATP synthesis in the catalytic domain of F(1) is coupled via a rotary mechanism of the central stalk subunits to proton translocation. Functionally, this protein is part of the stalk that links CF(0) to CF(1). It either transmits conformational changes from CF(0) to CF(1) or is implicated in proton conduction. This is ATP synthase subunit delta from Pseudothermotoga lettingae (strain ATCC BAA-301 / DSM 14385 / NBRC 107922 / TMO) (Thermotoga lettingae).